The chain runs to 317 residues: Malate dehydrogenase (317 aa).

NAD(+) contacts are provided by residues 13-18 and Asp-38; that span reads GAGNIG. Substrate is bound by residues Arg-87 and Arg-93. Residues Asn-100 and 123–125 contribute to the NAD(+) site; that span reads VTN. Residues Asn-125 and Arg-156 each coordinate substrate. His-180 serves as the catalytic Proton acceptor.

It belongs to the LDH/MDH superfamily. MDH type 3 family.

It catalyses the reaction (S)-malate + NAD(+) = oxaloacetate + NADH + H(+). Catalyzes the reversible oxidation of malate to oxaloacetate. The polypeptide is Malate dehydrogenase (Anaplasma marginale (strain Florida)).